The primary structure comprises 325 residues: D-alanine--D-alanine ligase (325 aa).

The ATP-grasp domain maps to 109–309; the sequence is KRVCKERMLP…FCTLLDQLIE (201 aa). 136-191 provides a ligand contact to ATP; it reads CRRLPFPMFVKPANLGSSVGISKAHDEQELEAAFSLAKQYDRKIIVERGIEGRELE. Residues aspartate 262, glutamate 276, and asparagine 278 each coordinate Mg(2+).

The protein belongs to the D-alanine--D-alanine ligase family. Mg(2+) serves as cofactor. It depends on Mn(2+) as a cofactor.

Its subcellular location is the cytoplasm. The catalysed reaction is 2 D-alanine + ATP = D-alanyl-D-alanine + ADP + phosphate + H(+). Its pathway is cell wall biogenesis; peptidoglycan biosynthesis. Cell wall formation. This Solibacter usitatus (strain Ellin6076) protein is D-alanine--D-alanine ligase.